The primary structure comprises 339 residues: N-acetyl-gamma-glutamyl-phosphate reductase (339 aa).

The active site involves Cys144.

This sequence belongs to the NAGSA dehydrogenase family. Type 1 subfamily.

The protein resides in the cytoplasm. It catalyses the reaction N-acetyl-L-glutamate 5-semialdehyde + phosphate + NADP(+) = N-acetyl-L-glutamyl 5-phosphate + NADPH + H(+). It participates in amino-acid biosynthesis; L-arginine biosynthesis; N(2)-acetyl-L-ornithine from L-glutamate: step 3/4. In terms of biological role, catalyzes the NADPH-dependent reduction of N-acetyl-5-glutamyl phosphate to yield N-acetyl-L-glutamate 5-semialdehyde. This Methanobrevibacter smithii (strain ATCC 35061 / DSM 861 / OCM 144 / PS) protein is N-acetyl-gamma-glutamyl-phosphate reductase.